Here is a 536-residue protein sequence, read N- to C-terminus: Inactive phospholipase D5 (536 aa).

The helical transmembrane segment at 69 to 89 threads the bilayer; sequence IVIFALVCCFAILVALIFSAV. A glycan (N-linked (GlcNAc...) asparagine) is linked at Asn121. In terms of domain architecture, PLD phosphodiesterase 1 spans 215–242; it reads NKGRLQSSFWIVDKQHVYIGSAGLDWQS. N-linked (GlcNAc...) asparagine glycosylation occurs at Asn302. Positions 434–460 constitute a PLD phosphodiesterase 2 domain; it reads FPRLNRNKYMVTDGAAYIGNFDWVGND.

The protein belongs to the phospholipase D family.

The protein localises to the membrane. The polypeptide is Inactive phospholipase D5 (PLD5) (Homo sapiens (Human)).